A 1481-amino-acid chain; its full sequence is Cystic fibrosis transmembrane conductance regulator (1481 aa).

Residues 1-77 lie on the Cytoplasmic side of the membrane; that stretch reads MQRSPLEKAS…KLINALRRCF (77 aa). A helical transmembrane segment spans residues 78 to 98; it reads FWRFMFYGILLYLGEVTKAVQ. One can recognise an ABC transmembrane type-1 1 domain in the interval 81 to 365; that stretch reads FMFYGILLYL…WAVQTWYDSL (285 aa). The Extracellular segment spans residues 99 to 122; the sequence is PLLLGRIIASYDPDNKVERSIAIY. Residues 123 to 146 form a helical membrane-spanning segment; the sequence is LGIGLCLLFIVRMLLLHPAIFGLH. Residues 147–195 lie on the Cytoplasmic side of the membrane; sequence HIGMQMRIAMFSLIYKKILKLSSRVLDKISIGQLVSLLSNNLNKFDEGL. Residues 196–216 form a helical membrane-spanning segment; sequence ALAHFVWIAPLQVMLLMGLLW. The Extracellular segment spans residues 217–222; that stretch reads ELLQAS. A helical membrane pass occupies residues 223–243; that stretch reads AFCGLGFLIVLALFQSGLGRM. Residues 244–298 lie on the Cytoplasmic side of the membrane; it reads MMKYRDQRAGKINERLVITSEMIENIQSVKAYCWEEAMEKMIENLRQTELKLTRK. A helical transmembrane segment spans residues 299–319; that stretch reads AAYVRYFNSSAFFFSGFFVVF. Topologically, residues 320 to 339 are extracellular; it reads LSVLPYALIKGIILRKIFTT. A helical membrane pass occupies residues 340–358; the sequence is ISFCIVLRMAVTRQFPWAV. Residues 359–858 are Cytoplasmic-facing; the sequence is QTWYDSLGAI…YLRYITVHKS (500 aa). ATP is bound by residues W401, 458–465, and Q493; that span reads GSTGAGKT. Residues 423–646 form the ABC transporter 1 domain; it reads NGDNSLFFSN…RPDFSSKLMG (224 aa). C524 carries S-palmitoyl cysteine lipidation. Phosphoserine is present on residues S549 and S660. A disordered R region region spans residues 654-831; that stretch reads SAERRNSILT…EEINEEDLKE (178 aa). At S670 the chain carries Phosphoserine; by PKA. Residue S686 is modified to Phosphoserine. K688 participates in a covalent cross-link: Glycyl lysine isopeptide (Lys-Gly) (interchain with G-Cter in ubiquitin). Residues S700 and S712 each carry the phosphoserine modification. T717 bears the Phosphothreonine mark. S737, S768, S790, S795, and S813 each carry phosphoserine. The chain crosses the membrane as a helical span at residues 859 to 879; it reads LIFVLIWCLVIFLAEVAVSLV. An ABC transmembrane type-1 2 domain is found at 859 to 1155; it reads LIFVLIWCLV…AVNSSIDVDS (297 aa). The Extracellular portion of the chain corresponds to 880 to 918; the sequence is LLWLLGNAPAYNKGNSTISANSSYAVIITSTSAYYVFYI. N-linked (GlcNAc...) asparagine glycans are attached at residues N894 and N900. The discontinuously helical transmembrane segment at 919–939 threads the bilayer; it reads YVGVADTLLALGFFRGLPLVH. Topologically, residues 940 to 990 are cytoplasmic; the sequence is TLITVSKILHHKMLHSVLQAPMSTLNALKAGGILNRFSKDIAILDDLLPLT. Residues 991–1011 traverse the membrane as a helical segment; sequence IFDFIQLLLIVIGAVAVVSVL. Residues 1012–1013 lie on the Extracellular side of the membrane; sequence QP. Residues 1014-1034 traverse the membrane as a helical segment; sequence YIFLATVPVIVTFIILRAYFL. Residues 1035–1095 are Cytoplasmic-facing; it reads HTSQQLKQLE…TANWFLYLST (61 aa). A helical transmembrane segment spans residues 1096-1116; the sequence is LRWFQMRIEMVFVIFFIVVTF. The Extracellular portion of the chain corresponds to 1117 to 1130; it reads ISILTTGEGEGQVG. Residues 1131–1151 form a helical membrane-spanning segment; the sequence is IILTLAMNIMGTLQWAVNSSI. The Cytoplasmic segment spans residues 1152 to 1481; it reads DVDSLMRSVS…TEEEVQDTRL (330 aa). The ABC transporter 2 domain maps to 1211–1444; it reads MTVKDLTARY…KSLFRQAISP (234 aa). ATP-binding positions include Y1220 and 1245 to 1252; that span reads GRTGSGKS. The tract at residues 1387-1481 is interaction with GORASP2; the sequence is RTLKQAFADC…TEEEVQDTRL (95 aa). Residue C1396 is the site of S-palmitoyl cysteine attachment. A phosphoserine mark is found at S1445 and S1457. The disordered stretch occupies residues 1449 to 1481; sequence KLFPRRNSSKHKSRPPITALKEETEEEVQDTRL. The span at 1450-1462 shows a compositional bias: basic residues; it reads LFPRRNSSKHKSR. Acidic residues predominate over residues 1471 to 1481; that stretch reads ETEEEVQDTRL. The short motif at 1479 to 1481 is the PDZ-binding element; it reads TRL.

The protein belongs to the ABC transporter superfamily. ABCC family. CFTR transporter (TC 3.A.1.202) subfamily. As to quaternary structure, monomer; does not require oligomerization for channel activity. May form oligomers in the membrane. Interacts with SLC26A3, SLC26A6 and NHERF1. Interacts with SHANK2. Interacts with MYO6. Interacts (via C-terminus) with GOPC (via PDZ domain); this promotes CFTR internalization and thereby decreases channel activity. Interacts with SLC4A7 through NHERF1. Found in a complex with MYO5B and RAB11A. Interacts with ANO1. Interacts with SLC26A8. Interacts with AHCYL1; the interaction increases CFTR activity. Interacts with CSE1L. The core-glycosylated form interacts with GORASP2 (via PDZ GRASP-type 1 domain) in respone to ER stress. Interacts with MARCHF2; the interaction leads to CFTR ubiqtuitination and degradation. Interacts with ADGRG2. In terms of processing, N-glycosylated. Post-translationally, phosphorylated; cAMP treatment promotes phosphorylation and activates the channel. Dephosphorylation decreases the ATPase activity (in vitro). Phosphorylation at PKA sites activates the channel. Phosphorylation at PKC sites enhances the response to phosphorylation by PKA. Phosphorylated by AMPK; this inhibits channel activity. Ubiquitinated, leading to its degradation in the lysosome. Deubiquitination by USP10 in early endosomes enhances its endocytic recycling to the cell membrane. Ubiquitinated by RNF185 during ER stress. Ubiquitinated by MARCHF2.

The protein localises to the apical cell membrane. Its subcellular location is the early endosome membrane. It localises to the cell membrane. The protein resides in the recycling endosome membrane. It is found in the endoplasmic reticulum membrane. The protein localises to the nucleus. The catalysed reaction is ATP + H2O + closed Cl(-) channel = ADP + phosphate + open Cl(-) channel.. It carries out the reaction chloride(in) = chloride(out). The enzyme catalyses hydrogencarbonate(in) = hydrogencarbonate(out). It catalyses the reaction ATP + H2O = ADP + phosphate + H(+). In terms of biological role, epithelial ion channel that plays an important role in the regulation of epithelial ion and water transport and fluid homeostasis. Mediates the transport of chloride ions across the cell membrane. Possesses an intrinsic ATPase activity and utilizes ATP to gate its channel; the passive flow of anions through the channel is gated by cycles of ATP binding and hydrolysis by the ATP-binding domains. The ion channel is also permeable to HCO(3)(-); selectivity depends on the extracellular chloride concentration. Exerts its function also by modulating the activity of other ion channels and transporters. Contributes to the regulation of the pH and the ion content of the epithelial fluid layer. Modulates the activity of the epithelial sodium channel (ENaC) complex, in part by regulating the cell surface expression of the ENaC complex. May regulate bicarbonate secretion and salvage in epithelial cells by regulating the transporter SLC4A7. Can inhibit the chloride channel activity of ANO1. Plays a role in the chloride and bicarbonate homeostasis during sperm epididymal maturation and capacitation. In Microcebus murinus (Gray mouse lemur), this protein is Cystic fibrosis transmembrane conductance regulator.